Reading from the N-terminus, the 226-residue chain is Low-molecular weight cobalt-containing nitrile hydratase subunit beta (226 aa).

Residues 1–22 form a disordered region; the sequence is MDGIHDLGGRAGLGPIKPESDE.

Belongs to the nitrile hydratase subunit beta family. As to quaternary structure, heterodimer of an alpha and a beta chain.

The enzyme catalyses an aliphatic primary amide = an aliphatic nitrile + H2O. Its function is as follows. NHase catalyzes the hydration of various nitrile compounds to the corresponding amides. This Rhodococcus rhodochrous protein is Low-molecular weight cobalt-containing nitrile hydratase subunit beta.